The primary structure comprises 336 residues: Anthranilate phosphoribosyltransferase (336 aa).

5-phospho-alpha-D-ribose 1-diphosphate is bound by residues glycine 83, 86 to 87, threonine 91, 93 to 96, 111 to 119, and serine 123; these read GD, NIST, and KHGNRSVSS. Glycine 83 is an anthranilate binding site. Serine 95 is a binding site for Mg(2+). Asparagine 114 lines the anthranilate pocket. Residue arginine 169 coordinates anthranilate. Mg(2+) contacts are provided by aspartate 227 and glutamate 228.

It belongs to the anthranilate phosphoribosyltransferase family. In terms of assembly, homodimer. Requires Mg(2+) as cofactor.

It catalyses the reaction N-(5-phospho-beta-D-ribosyl)anthranilate + diphosphate = 5-phospho-alpha-D-ribose 1-diphosphate + anthranilate. The protein operates within amino-acid biosynthesis; L-tryptophan biosynthesis; L-tryptophan from chorismate: step 2/5. In terms of biological role, catalyzes the transfer of the phosphoribosyl group of 5-phosphorylribose-1-pyrophosphate (PRPP) to anthranilate to yield N-(5'-phosphoribosyl)-anthranilate (PRA). The polypeptide is Anthranilate phosphoribosyltransferase (Vibrio campbellii (strain ATCC BAA-1116)).